Reading from the N-terminus, the 546-residue chain is Glutamyl-tRNA(Gln) amidotransferase subunit A, chloroplastic/mitochondrial (546 aa).

A disordered region spans residues 21–52 (KRRRFHSSTPLFLSQPQTLASTDPPSSPPQSQ). Residues 27-43 (SSTPLFLSQPQTLASTD) are compositionally biased toward polar residues. Catalysis depends on charge relay system residues lysine 123 and serine 198. Catalysis depends on serine 222, which acts as the Acyl-ester intermediate.

Belongs to the amidase family. GatA subfamily. In terms of assembly, subunit of the heterotrimeric GatCAB amidotransferase (AdT) complex, composed of A, B and C subunits.

It localises to the mitochondrion. Its subcellular location is the plastid. The protein localises to the chloroplast stroma. It carries out the reaction L-glutamyl-tRNA(Gln) + L-glutamine + ATP + H2O = L-glutaminyl-tRNA(Gln) + L-glutamate + ADP + phosphate + H(+). In terms of biological role, allows the formation of correctly charged Gln-tRNA(Gln) through the transamidation of misacylated Glu-tRNA(Gln) in chloroplasts and mitochondria. The reaction takes place in the presence of glutamine and ATP through an activated gamma-phospho-Glu-tRNA(Gln). The sequence is that of Glutamyl-tRNA(Gln) amidotransferase subunit A, chloroplastic/mitochondrial from Vitis vinifera (Grape).